The sequence spans 517 residues: Cytochrome P450 monooxygenase 124 (517 aa).

Residues 3 to 23 form a helical membrane-spanning segment; the sequence is SLLVLFVSLLALGALKKHLDF. Heme is bound at residue Cys-453.

Belongs to the cytochrome P450 family. Requires heme as cofactor.

The protein resides in the membrane. Its pathway is secondary metabolite biosynthesis. In terms of biological role, cytochrome P450 monooxygenase that is able to use trans-stilbene as a substrate for oxidation. The chain is Cytochrome P450 monooxygenase 124 from Postia placenta (strain ATCC 44394 / Madison 698-R) (Brown rot fungus).